The chain runs to 185 residues: Ribosome-recycling factor (185 aa).

It belongs to the RRF family.

The protein localises to the cytoplasm. Responsible for the release of ribosomes from messenger RNA at the termination of protein biosynthesis. May increase the efficiency of translation by recycling ribosomes from one round of translation to another. The chain is Ribosome-recycling factor from Streptococcus pyogenes serotype M18 (strain MGAS8232).